The sequence spans 141 residues: Putative pre-16S rRNA nuclease (141 aa).

The protein belongs to the YqgF nuclease family.

The protein resides in the cytoplasm. Could be a nuclease involved in processing of the 5'-end of pre-16S rRNA. The protein is Putative pre-16S rRNA nuclease of Histophilus somni (strain 129Pt) (Haemophilus somnus).